The sequence spans 164 residues: Phosphopantetheine adenylyltransferase (164 aa).

S9 lines the substrate pocket. Residues 9-10 (SF) and H17 each bind ATP. Residues K41, V78, and R92 each coordinate substrate. Residues 93–95 (GLR), E103, and 128–134 (SRPITAT) each bind ATP.

This sequence belongs to the bacterial CoaD family. Homohexamer. Requires Mg(2+) as cofactor.

The protein localises to the cytoplasm. It carries out the reaction (R)-4'-phosphopantetheine + ATP + H(+) = 3'-dephospho-CoA + diphosphate. It functions in the pathway cofactor biosynthesis; coenzyme A biosynthesis; CoA from (R)-pantothenate: step 4/5. Reversibly transfers an adenylyl group from ATP to 4'-phosphopantetheine, yielding dephospho-CoA (dPCoA) and pyrophosphate. The chain is Phosphopantetheine adenylyltransferase from Rhizobium leguminosarum bv. trifolii (strain WSM2304).